The following is a 101-amino-acid chain: uncharacterized protein (101 aa).

The signal sequence occupies residues 1 to 23 (MERRTGVVLIIFVTFCEAMMARA). The helical transmembrane segment at 38-58 (FLLFIIHTSCTMVAFIIGNLA) threads the bilayer.

It localises to the host membrane. This is an uncharacterized protein from Cryphonectria parasitica (Chestnut blight fungus).